The following is a 341-amino-acid chain: Thiamine-phosphate synthase (341 aa).

Positions 1–123 (MAVVEEQVVL…AAAAKEWRYR (123 aa)) are unknown. The interval 61 to 80 (AARDTPHDPGTGLEHPDEGV) is disordered. The segment at 124–341 (VYTLESTATG…AWFLERLNRG (218 aa)) is thiamine-phosphate synthase. 4-amino-2-methyl-5-(diphosphooxymethyl)pyrimidine is bound by residues 171 to 175 (QLREK) and N203. Positions 204 and 223 each coordinate Mg(2+). A 4-amino-2-methyl-5-(diphosphooxymethyl)pyrimidine-binding site is contributed by S242. 268–270 (TPT) lines the 2-[(2R,5Z)-2-carboxy-4-methylthiazol-5(2H)-ylidene]ethyl phosphate pocket. Position 271 (K271) interacts with 4-amino-2-methyl-5-(diphosphooxymethyl)pyrimidine. G298 lines the 2-[(2R,5Z)-2-carboxy-4-methylthiazol-5(2H)-ylidene]ethyl phosphate pocket.

Belongs to the thiamine-phosphate synthase family. It depends on Mg(2+) as a cofactor.

It carries out the reaction 2-[(2R,5Z)-2-carboxy-4-methylthiazol-5(2H)-ylidene]ethyl phosphate + 4-amino-2-methyl-5-(diphosphooxymethyl)pyrimidine + 2 H(+) = thiamine phosphate + CO2 + diphosphate. The catalysed reaction is 2-(2-carboxy-4-methylthiazol-5-yl)ethyl phosphate + 4-amino-2-methyl-5-(diphosphooxymethyl)pyrimidine + 2 H(+) = thiamine phosphate + CO2 + diphosphate. The enzyme catalyses 4-methyl-5-(2-phosphooxyethyl)-thiazole + 4-amino-2-methyl-5-(diphosphooxymethyl)pyrimidine + H(+) = thiamine phosphate + diphosphate. Its pathway is cofactor biosynthesis; thiamine diphosphate biosynthesis; thiamine phosphate from 4-amino-2-methyl-5-diphosphomethylpyrimidine and 4-methyl-5-(2-phosphoethyl)-thiazole: step 1/1. Functionally, condenses 4-methyl-5-(beta-hydroxyethyl)thiazole monophosphate (THZ-P) and 2-methyl-4-amino-5-hydroxymethyl pyrimidine pyrophosphate (HMP-PP) to form thiamine monophosphate (TMP). This is Thiamine-phosphate synthase from Gloeobacter violaceus (strain ATCC 29082 / PCC 7421).